A 534-amino-acid polypeptide reads, in one-letter code: NAD(P)H-quinone oxidoreductase chain 4 (534 aa).

Helical transmembrane passes span 12 to 32 (FPWL…IPFF), 44 to 64 (FALS…INGF), 96 to 116 (MPLI…AWPV), 120 to 140 (PKLF…VFAV), 144 to 164 (LLFF…LAIW), 176 to 196 (FIIY…AMGF), 220 to 240 (ILCY…VPLH), 251 to 271 (TAPV…YALL), 285 to 305 (FAPL…LTSF), 314 to 334 (IAYS…SFSS), 340 to 360 (AMLQ…LVGA), 384 to 404 (FALW…SGFV), 425 to 445 (VVMA…LLSM), and 472 to 492 (VYII…PRLV).

The protein belongs to the complex I subunit 4 family.

It localises to the cellular thylakoid membrane. The catalysed reaction is a plastoquinone + NADH + (n+1) H(+)(in) = a plastoquinol + NAD(+) + n H(+)(out). It catalyses the reaction a plastoquinone + NADPH + (n+1) H(+)(in) = a plastoquinol + NADP(+) + n H(+)(out). NDH-1 shuttles electrons from NAD(P)H, via FMN and iron-sulfur (Fe-S) centers, to quinones in the respiratory chain. The immediate electron acceptor for the enzyme in this species is believed to be plastoquinone. Couples the redox reaction to proton translocation (for every two electrons transferred, four hydrogen ions are translocated across the cytoplasmic membrane), and thus conserves the redox energy in a proton gradient. The polypeptide is NAD(P)H-quinone oxidoreductase chain 4 (Prochlorococcus marinus (strain AS9601)).